The sequence spans 613 residues: Proline--tRNA ligase (613 aa).

It belongs to the class-II aminoacyl-tRNA synthetase family. ProS type 1 subfamily. Homodimer.

The protein resides in the cytoplasm. The enzyme catalyses tRNA(Pro) + L-proline + ATP = L-prolyl-tRNA(Pro) + AMP + diphosphate. In terms of biological role, catalyzes the attachment of proline to tRNA(Pro) in a two-step reaction: proline is first activated by ATP to form Pro-AMP and then transferred to the acceptor end of tRNA(Pro). As ProRS can inadvertently accommodate and process non-cognate amino acids such as alanine and cysteine, to avoid such errors it has two additional distinct editing activities against alanine. One activity is designated as 'pretransfer' editing and involves the tRNA(Pro)-independent hydrolysis of activated Ala-AMP. The other activity is designated 'posttransfer' editing and involves deacylation of mischarged Ala-tRNA(Pro). The misacylated Cys-tRNA(Pro) is not edited by ProRS. The protein is Proline--tRNA ligase of Cyanothece sp. (strain PCC 7425 / ATCC 29141).